The chain runs to 185 residues: Ribosome-recycling factor (185 aa).

It belongs to the RRF family.

It localises to the cytoplasm. Responsible for the release of ribosomes from messenger RNA at the termination of protein biosynthesis. May increase the efficiency of translation by recycling ribosomes from one round of translation to another. The polypeptide is Ribosome-recycling factor (Pasteurella multocida (strain Pm70)).